Reading from the N-terminus, the 368-residue chain is MTALGTPIQGVTLYSFTRAFHGREYDLEGLIRKTAADGFGPGLEIIGFSSFRGFPAIDDAYAGWFRDLIDEVGLVTTSLAVNADIGIHRDRLLNQDELIEYMTLQIKAAAKLGFPIARVQISIEPDSMEALAPIAEAHGVTLALEVHADQYASHPRILALRDRYEKVGSPFLGFTMDWGATVSGFAPSLIEAYRRRGASEELLGQVVDLWNTYYEQGPPADQADHGQRFGSFIGLAARHGRPDLGIDFGINGTGLFGPARVDDWRTIAPWIKHVHGKFFGIDENGEEPSVPVRDLVKLLVENGYNGAISSEYEGWHWNYWQSPFDIISDEQAVQRSAAEAAGSRMITDLAEARTQLGAWLPNTEGAHA.

A divalent metal cation is bound at residue Glu-145. The active-site Proton acceptor is the His-147. 3 residues coordinate a divalent metal cation: Asp-177, His-275, and Glu-311.

This sequence belongs to the C-glycoside deglycosidase alpha subunit family. Heterodimer composed of an alpha subunit (CarB) and a beta subunit (CarC). A divalent metal cation is required as a cofactor.

It catalyses the reaction 3''-dehydroisovitexin = 1,5-anhydro-D-erythro-hex-1-en-3-ulose + apigenin. The enzyme catalyses 3''-dehydroisoorientin = 1,5-anhydro-D-erythro-hex-1-en-3-ulose + luteolin. In terms of biological role, carbon-carbon bond-cleaving enzyme which participates in the metabolism of C-glycosides. Acts on the C6-glycosylated compounds 3''-dehydroisovitexin (3''-oxo-isovitexin) and 3''-dehydroisoorientin (3''-oxo-homoorientin). Shows weak activity with 3'-dehydromangiferin (3'-oxo-mangiferin). The polypeptide is C-glycoside deglycosidase alpha subunit (Microbacterium trichothecenolyticum (Aureobacterium trichothecenolyticum)).